Reading from the N-terminus, the 420-residue chain is UDP-N-acetylglucosamine 1-carboxyvinyltransferase 1 (420 aa).

22–23 lines the phosphoenolpyruvate pocket; sequence KN. Arginine 91 contributes to the UDP-N-acetyl-alpha-D-glucosamine binding site. Cysteine 115 serves as the catalytic Proton donor. Cysteine 115 carries the 2-(S-cysteinyl)pyruvic acid O-phosphothioketal modification. Residues 120-124, aspartate 303, and valine 325 contribute to the UDP-N-acetyl-alpha-D-glucosamine site; that span reads RPMDL.

The protein belongs to the EPSP synthase family. MurA subfamily.

Its subcellular location is the cytoplasm. The catalysed reaction is phosphoenolpyruvate + UDP-N-acetyl-alpha-D-glucosamine = UDP-N-acetyl-3-O-(1-carboxyvinyl)-alpha-D-glucosamine + phosphate. The protein operates within cell wall biogenesis; peptidoglycan biosynthesis. Functionally, cell wall formation. Adds enolpyruvyl to UDP-N-acetylglucosamine. This is UDP-N-acetylglucosamine 1-carboxyvinyltransferase 1 from Carboxydothermus hydrogenoformans (strain ATCC BAA-161 / DSM 6008 / Z-2901).